Consider the following 449-residue polypeptide: Ribulose bisphosphate carboxylase large chain (449 aa).

Residues 1-2 (MS) constitute a propeptide that is removed on maturation. Position 3 is an N-acetylproline (P3). Residue K14 is modified to N6,N6,N6-trimethyllysine. Residues N123 and T173 each coordinate substrate. K175 serves as the catalytic Proton acceptor. K177 lines the substrate pocket. K201, D203, and E204 together coordinate Mg(2+). The residue at position 201 (K201) is an N6-carboxylysine. H294 serves as the catalytic Proton acceptor. 3 residues coordinate substrate: X295, H327, and S379.

Belongs to the RuBisCO large chain family. Type I subfamily. As to quaternary structure, heterohexadecamer of 8 large chains and 8 small chains; disulfide-linked. The disulfide link is formed within the large subunit homodimers. Mg(2+) is required as a cofactor. In terms of processing, the disulfide bond which can form in the large chain dimeric partners within the hexadecamer appears to be associated with oxidative stress and protein turnover.

It is found in the plastid. The protein localises to the chloroplast. The enzyme catalyses 2 (2R)-3-phosphoglycerate + 2 H(+) = D-ribulose 1,5-bisphosphate + CO2 + H2O. It carries out the reaction D-ribulose 1,5-bisphosphate + O2 = 2-phosphoglycolate + (2R)-3-phosphoglycerate + 2 H(+). Functionally, ruBisCO catalyzes two reactions: the carboxylation of D-ribulose 1,5-bisphosphate, the primary event in carbon dioxide fixation, as well as the oxidative fragmentation of the pentose substrate in the photorespiration process. Both reactions occur simultaneously and in competition at the same active site. The polypeptide is Ribulose bisphosphate carboxylase large chain (Salacia pallescens).